We begin with the raw amino-acid sequence, 578 residues long: Membrane protein insertase YidC (578 aa).

Residues 7 to 27 (FLAIAISLGILLGFQGLYRHF) traverse the membrane as a helical segment. Residues 35-70 (ARTATNAGQGKPNNTLGAVPTDATASQSPPPKEGAR) are disordered. The span at 37 to 50 (TATNAGQGKPNNTL) shows a compositional bias: polar residues. The next 4 membrane-spanning stretches (helical) occupy residues 362–382 (LVGNFGVAILIFTVLVKAAFY), 436–456 (LPMLLQFPIFFSLYKVIFVTI), 491–511 (HISPFLHLGIWPLIMGGTMYL), and 530–550 (FMPIIFTFMLARFPVGLVIYW).

Belongs to the OXA1/ALB3/YidC family. Type 1 subfamily. In terms of assembly, interacts with the Sec translocase complex via SecD. Specifically interacts with transmembrane segments of nascent integral membrane proteins during membrane integration.

The protein resides in the cell inner membrane. Its function is as follows. Required for the insertion and/or proper folding and/or complex formation of integral membrane proteins into the membrane. Involved in integration of membrane proteins that insert both dependently and independently of the Sec translocase complex, as well as at least some lipoproteins. Aids folding of multispanning membrane proteins. In Granulibacter bethesdensis (strain ATCC BAA-1260 / CGDNIH1), this protein is Membrane protein insertase YidC.